The following is a 176-amino-acid chain: ATP-dependent protease subunit HslV (176 aa).

The active site involves threonine 6. Residues serine 161, cysteine 164, and threonine 167 each coordinate Na(+).

It belongs to the peptidase T1B family. HslV subfamily. In terms of assembly, a double ring-shaped homohexamer of HslV is capped on each side by a ring-shaped HslU homohexamer. The assembly of the HslU/HslV complex is dependent on binding of ATP.

It is found in the cytoplasm. The catalysed reaction is ATP-dependent cleavage of peptide bonds with broad specificity.. Allosterically activated by HslU binding. Protease subunit of a proteasome-like degradation complex believed to be a general protein degrading machinery. This is ATP-dependent protease subunit HslV from Aquifex aeolicus (strain VF5).